The chain runs to 649 residues: Protein mitoshell (649 aa).

Residues Leu167–Pro176 show a composition bias toward basic and acidic residues. Disordered regions lie at residues Leu167–Ala193, His389–Ser414, and Ala485–Tyr512. Low complexity predominate over residues Glu177–Ser191. Polar residues-rich tracts occupy residues Ala393–Ser414 and Ala485–Ser503.

Required for male meiotic cytokinesis through its involvement in the regulation of mitochondrial aggregation and fusion, astral spindle assembly and contractile ring formation. The sequence is that of Protein mitoshell from Drosophila melanogaster (Fruit fly).